The following is a 254-amino-acid chain: H-2 class II histocompatibility antigen, I-E alpha chain (254 aa).

An N-terminal signal peptide occupies residues 1–24 (RSRALILGVLALTTMLSLCGGEDD). Positions 25-109 (IEADHVAFYG…KDSNFTPAAN (85 aa)) are alpha-1. Residues 25-216 (IEADHVAFYG…IPAPMSELTE (192 aa)) are Extracellular-facing. Residues Asn-103 and Asn-143 are each glycosylated (N-linked (GlcNAc...) asparagine). Residues 110-203 (EAPQATVFPK…GLEEPVLKHW (94 aa)) are alpha-2. An Ig-like C1-type domain is found at 112–204 (PQATVFPKSP…LEEPVLKHWE (93 aa)). The cysteines at positions 132 and 188 are disulfide-linked. A connecting peptide region spans residues 204-216 (EPEIPAPMSELTE). A helical membrane pass occupies residues 217–242 (TVVCALGLSVGLVGIVVGTIFIIQGL). At 243 to 254 (RSGGTSRHPGPL) the chain is on the cytoplasmic side.

It belongs to the MHC class II family.

Its subcellular location is the membrane. The protein is H-2 class II histocompatibility antigen, I-E alpha chain of Mus musculus (Mouse).